Reading from the N-terminus, the 522-residue chain is Target of rapamycin complex 2 subunit MAPKAP1 (522 aa).

Ala-2 bears the N-acetylalanine mark. Residues 2-184 are interaction with MAP3K2; it reads AFLDNPTIIL…KKIDVYLPLH (183 aa). The segment at 2–267 is interaction with NBN; the sequence is AFLDNPTIIL…GFSTLALVEK (266 aa). Phosphothreonine is present on Thr-86. 4 positions are modified to phosphoserine: Ser-128, Ser-186, Ser-315, and Ser-356. One can recognise a CRIM domain in the interval 139-267; it reads QSILSVRLEQ…GFSTLALVEK (129 aa). Residues 279–353 are SIN1-type RBD; that stretch reads LFVRINAAHG…QSAWEFCLVR (75 aa). Residues 382–487 form the SIN1-type PH domain; the sequence is HYKSFKVSMI…IVLKVNYILE (106 aa). An a 1,2-diacyl-sn-glycero-3-phospho-(1D-myo-inositol-3,4,5-trisphosphate)-binding site is contributed by Arg-393. A Phosphothreonine modification is found at Thr-398. 2 residues coordinate a 1,2-diacyl-sn-glycero-3-phospho-(1D-myo-inositol-3,4,5-trisphosphate): Lys-428 and Lys-464. The interval 468 to 522 is interaction with ATF2; that stretch reads FESDAATVNEIVLKVNYILESRASTARADYFAQKQRKLNRRTSFSFQKEKKSGQQ. Position 510 is a phosphoserine (Ser-510).

The protein belongs to the SIN1 family. Component of the mechanistic target of rapamycin complex 2 (mTORC2), consisting in two heterotretramers composed of MTOR, MLST8, RICTOR and MAPKAP1/SIN1. The mTORC2 core complex associates with PRR5/PROTOR1 and/or PRR5L/PROTOR2. Contrary to mTORC1, mTORC2 does not bind to and is not sensitive to FKBP12-rapamycin. Interacts with MAP3K2. Interacts with ATF2. Interacts with MAPK8. Interacts with GTP-bound HRAS and KRAS; inhibiting their activity. Interacts with IFNAR2. Phosphorylation at Ser-128 by PKC promotes relocalization to the perinuclear region, where the mTORC2 complex specifically mediates phosphorylation of SGK1. Phosphorylated at Thr-86 by AKT1 or RPS6KB1 in the presence of growth factors; the effect of this phosphorylation is however unclear. According to two studies, phosphorylation at Thr-86 by AKT1 is part of a positive feedback loop that increases mTORC2 activation. According to another study, phosphorylation at Thr-86 and Thr-398 by RPS6KB1 promotes dissociation from the mTORC2 complex, leading to inhibit mTORC2 signaling.

The protein resides in the cell membrane. Its subcellular location is the endoplasmic reticulum membrane. It is found in the early endosome membrane. It localises to the late endosome membrane. The protein localises to the lysosome membrane. The protein resides in the golgi apparatus membrane. Its subcellular location is the mitochondrion outer membrane. It is found in the cytoplasm. It localises to the perinuclear region. The protein localises to the nucleus. Phosphatidylinositol 3,4,5-trisphosphate (PI(3,4,5)P3) promotes MTOR activation by relieving MAPKAP1/SIN1-mediated inhibition of MTOR that takes place in absence of PI(3,4,5)P3. In terms of biological role, component of the mechanistic target of rapamycin complex 2 (mTORC2), which transduces signals from growth factors to pathways involved in proliferation, cytoskeletal organization, lipogenesis and anabolic output. In response to growth factors, mTORC2 phosphorylates and activates AGC protein kinase family members, including AKT (AKT1, AKT2 and AKT3), PKC (PRKCA, PRKCB and PRKCE) and SGK1. In contrast to mTORC1, mTORC2 is nutrient-insensitive. Within the mTORC2 complex, MAPKAP1/SIN1 acts as a substrate adapter which recognizes and binds AGC protein kinase family members for phosphorylation by MTOR. mTORC2 plays a critical role in AKT1 activation by mediating phosphorylation of different sites depending on the context, such as 'Thr-450', 'Ser-473', 'Ser-477' or 'Thr-479', facilitating the phosphorylation of the activation loop of AKT1 on 'Thr-308' by PDPK1/PDK1 which is a prerequisite for full activation. mTORC2 catalyzes the phosphorylation of SGK1 at 'Ser-422' and of PRKCA on 'Ser-657'. The mTORC2 complex also phosphorylates various proteins involved in insulin signaling, such as FBXW8 and IGF2BP1. mTORC2 acts upstream of Rho GTPases to regulate the actin cytoskeleton, probably by activating one or more Rho-type guanine nucleotide exchange factors. mTORC2 promotes the serum-induced formation of stress-fibers or F-actin. MAPKAP1 inhibits MAP3K2 by preventing its dimerization and autophosphorylation. Inhibits HRAS and KRAS independently of mTORC2 complex. Enhances osmotic stress-induced phosphorylation of ATF2 and ATF2-mediated transcription. Involved in ciliogenesis, regulates cilia length through its interaction with CCDC28B independently of mTORC2 complex. The chain is Target of rapamycin complex 2 subunit MAPKAP1 (MAPKAP1) from Bos taurus (Bovine).